A 290-amino-acid chain; its full sequence is Poly-beta-1,6-N-acetyl-D-glucosamine N-deacetylase (290 aa).

Positions 1–28 (MKYRKLIILVLSILIILPVSTLDGHHIA) are cleaved as a signal peptide. Residues 114-290 (RSVWINFDDM…KRWDGFHEKD (177 aa)) enclose the NodB homology domain.

The protein belongs to the polysaccharide deacetylase family.

It localises to the secreted. The protein resides in the cell wall. Functionally, catalyzes the N-deacetylation of poly-beta-1,6-N-acetyl-D-glucosamine (PNAG, also referred to as PIA), a biofilm adhesin polysaccharide. N-deacetylation is crucial for attachment of the polysaccharide to the bacterial cell surface; it leads to the introduction of positive charges in the otherwise neutral PIA polymer, allowing electrostatic interactions. The polypeptide is Poly-beta-1,6-N-acetyl-D-glucosamine N-deacetylase (icaB) (Staphylococcus aureus (strain MRSA252)).